We begin with the raw amino-acid sequence, 303 residues long: Magainins (303 aa).

The first 18 residues, 1-18, serve as a signal peptide directing secretion; that stretch reads MFKGLFICSLIAVICANA. 13 consecutive propeptides follow at residues 19–26, 33–36, 62–72, 79–82, 108–118, 125–128, 154–164, 171–174, 200–210, 217–220, 246–256, 263–266, and 292–303; these read LPQPEASA, REVR, DAEAVGPEAFA, and DAEAVDDRRWVE.

The protein belongs to the gastrin/cholecystokinin family. Magainin subfamily. Synthesized in the stomach and stored in a novel granular multinucleated cell in the gastric mucosa. It is stored as active, processed peptides in large granules within the granular gland secretions of the skin.

It localises to the secreted. In terms of biological role, antimicrobial peptides that inhibit the growth of numerous species of bacteria and fungi and induce osmotic lysis of protozoa. Rapidly inactivates channel catfish herpesvirus (ED(50)=48 uM) over a wide temperature range. Magainins are membrane lytic agents. The polypeptide is Magainins (magainins) (Xenopus laevis (African clawed frog)).